A 397-amino-acid chain; its full sequence is Glutamate 5-kinase (397 aa).

The disordered stretch occupies residues 1-28; that stretch reads MVADLTSDISESQEQETETNSANNNGAV. Lys40 contacts ATP. Substrate contacts are provided by Ser80, Asp168, and Asn180. ATP is bound by residues 200–201 and 243–249; these read SD and SGGMASK. One can recognise a PUA domain in the interval 306 to 383; sequence HGQVYIDQGA…QEIADILGYE (78 aa).

It belongs to the glutamate 5-kinase family.

It localises to the cytoplasm. It catalyses the reaction L-glutamate + ATP = L-glutamyl 5-phosphate + ADP. Its pathway is amino-acid biosynthesis; L-proline biosynthesis; L-glutamate 5-semialdehyde from L-glutamate: step 1/2. In terms of biological role, catalyzes the transfer of a phosphate group to glutamate to form L-glutamate 5-phosphate. The sequence is that of Glutamate 5-kinase from Zymomonas mobilis subsp. mobilis (strain ATCC 31821 / ZM4 / CP4).